Reading from the N-terminus, the 396-residue chain is L-lactate dehydrogenase (396 aa).

In terms of domain architecture, FMN hydroxy acid dehydrogenase spans 1–380 (MIISAASDYR…SGDSLVQELG (380 aa)). Y24 is a substrate binding site. The FMN site is built by S106 and Q127. Y129 serves as a coordination point for substrate. T155 lines the FMN pocket. Residue R164 participates in substrate binding. K251 serves as a coordination point for FMN. The Proton acceptor role is filled by H275. Position 278 (R278) interacts with substrate. 306–330 (DSGIRNGLDVVRMIALGADTVLLGR) contributes to the FMN binding site.

The protein belongs to the FMN-dependent alpha-hydroxy acid dehydrogenase family. Requires FMN as cofactor.

It localises to the cell inner membrane. It carries out the reaction (S)-lactate + A = pyruvate + AH2. Functionally, catalyzes the conversion of L-lactate to pyruvate. Is coupled to the respiratory chain. In Salmonella enteritidis PT4 (strain P125109), this protein is L-lactate dehydrogenase.